The primary structure comprises 294 residues: Homoserine kinase (294 aa).

Arginine 83 to alanine 93 is a binding site for ATP.

It belongs to the GHMP kinase family. Homoserine kinase subfamily.

It is found in the cytoplasm. It carries out the reaction L-homoserine + ATP = O-phospho-L-homoserine + ADP + H(+). It participates in amino-acid biosynthesis; L-threonine biosynthesis; L-threonine from L-aspartate: step 4/5. Catalyzes the ATP-dependent phosphorylation of L-homoserine to L-homoserine phosphate. This chain is Homoserine kinase, found in Pyrococcus abyssi (strain GE5 / Orsay).